Consider the following 159-residue polypeptide: SsrA-binding protein (159 aa).

Belongs to the SmpB family.

It localises to the cytoplasm. Functionally, required for rescue of stalled ribosomes mediated by trans-translation. Binds to transfer-messenger RNA (tmRNA), required for stable association of tmRNA with ribosomes. tmRNA and SmpB together mimic tRNA shape, replacing the anticodon stem-loop with SmpB. tmRNA is encoded by the ssrA gene; the 2 termini fold to resemble tRNA(Ala) and it encodes a 'tag peptide', a short internal open reading frame. During trans-translation Ala-aminoacylated tmRNA acts like a tRNA, entering the A-site of stalled ribosomes, displacing the stalled mRNA. The ribosome then switches to translate the ORF on the tmRNA; the nascent peptide is terminated with the 'tag peptide' encoded by the tmRNA and targeted for degradation. The ribosome is freed to recommence translation, which seems to be the essential function of trans-translation. This Idiomarina loihiensis (strain ATCC BAA-735 / DSM 15497 / L2-TR) protein is SsrA-binding protein.